The sequence spans 230 residues: Ribonuclease 3 (230 aa).

The 121-residue stretch at Tyr-5–Asp-125 folds into the RNase III domain. Position 40 (Glu-40) interacts with Mg(2+). Asp-44 is an active-site residue. Asp-111 and Glu-114 together coordinate Mg(2+). Residue Glu-114 is part of the active site. The 71-residue stretch at Asp-153–Gln-223 folds into the DRBM domain.

Belongs to the ribonuclease III family. As to quaternary structure, homodimer. Requires Mg(2+) as cofactor.

Its subcellular location is the cytoplasm. It carries out the reaction Endonucleolytic cleavage to 5'-phosphomonoester.. Its function is as follows. Digests double-stranded RNA. Involved in the processing of primary rRNA transcript to yield the immediate precursors to the large and small rRNAs (23S and 16S). Processes some mRNAs, and tRNAs when they are encoded in the rRNA operon. Processes pre-crRNA and tracrRNA of type II CRISPR loci if present in the organism. The protein is Ribonuclease 3 of Francisella tularensis subsp. tularensis (strain FSC 198).